The primary structure comprises 113 residues: uncharacterized protein (113 aa).

This sequence to M.jannaschii MJ0886 C-terminal region.

This is an uncharacterized protein from Clostridium pasteurianum.